The chain runs to 51 residues: Large ribosomal subunit protein eL39 (51 aa).

Belongs to the eukaryotic ribosomal protein eL39 family.

The sequence is that of Large ribosomal subunit protein eL39 from Sulfurisphaera tokodaii (strain DSM 16993 / JCM 10545 / NBRC 100140 / 7) (Sulfolobus tokodaii).